The primary structure comprises 243 residues: Uridylate kinase (243 aa).

15–18 (KLSG) provides a ligand contact to ATP. Gly-56 is a UMP binding site. Residues Gly-57 and Arg-61 each contribute to the ATP site. 138–145 (TGNPYFST) serves as a coordination point for UMP. Asn-166, Tyr-172, and Asp-175 together coordinate ATP.

This sequence belongs to the UMP kinase family. As to quaternary structure, homohexamer.

Its subcellular location is the cytoplasm. The enzyme catalyses UMP + ATP = UDP + ADP. Its pathway is pyrimidine metabolism; CTP biosynthesis via de novo pathway; UDP from UMP (UMPK route): step 1/1. Its activity is regulated as follows. Inhibited by UTP. Functionally, catalyzes the reversible phosphorylation of UMP to UDP. This chain is Uridylate kinase, found in Mycoplasma genitalium (strain ATCC 33530 / DSM 19775 / NCTC 10195 / G37) (Mycoplasmoides genitalium).